The sequence spans 152 residues: Transcriptional regulator MraZ (152 aa).

2 SpoVT-AbrB domains span residues 5 to 52 and 81 to 124; these read ASAI…PIHE and AHEV…DEQS.

This sequence belongs to the MraZ family. Forms oligomers.

The protein resides in the cytoplasm. It localises to the nucleoid. This Shewanella baltica (strain OS195) protein is Transcriptional regulator MraZ.